We begin with the raw amino-acid sequence, 1071 residues long: Carbamoyl phosphate synthase large chain (1071 aa).

The tract at residues 1 to 399 (MPKREDIKKV…SLLKAFKSLD (399 aa)) is carboxyphosphate synthetic domain. Residues Arg129, Arg169, Gly175, Gly176, Glu208, Val210, Glu215, Gly241, Val242, His243, Gln284, and Glu296 each coordinate ATP. Residues 133–325 (KETMLRIGEK…IARVTAKIAI (193 aa)) form the ATP-grasp 1 domain. Mg(2+) is bound by residues Gln284, Glu296, and Asn298. Gln284, Glu296, and Asn298 together coordinate Mn(2+). The oligomerization domain stretch occupies residues 400-540 (IDNQLGNKHW…YSTYEDSCET (141 aa)). The tract at residues 541–932 (NATTDKKKIL…YKAELAADNV (392 aa)) is carbamoyl phosphate synthetic domain. An ATP-grasp 2 domain is found at 673–864 (YILMKELGVP…LAKIAAKVIA (192 aa)). 10 residues coordinate ATP: Arg709, Asp748, Leu750, Glu755, Gly780, Val781, His782, Ser783, Gln823, and Glu835. Residues Gln823, Glu835, and Asn837 each contribute to the Mg(2+) site. Gln823, Glu835, and Asn837 together coordinate Mn(2+). One can recognise an MGS-like domain in the interval 931-1071 (NVLPLTGKVF…INEYHKEMEN (141 aa)). Residues 933 to 1071 (LPLTGKVFLS…INEYHKEMEN (139 aa)) form an allosteric domain region.

This sequence belongs to the CarB family. As to quaternary structure, composed of two chains; the small (or glutamine) chain promotes the hydrolysis of glutamine to ammonia, which is used by the large (or ammonia) chain to synthesize carbamoyl phosphate. Tetramer of heterodimers (alpha,beta)4. Requires Mg(2+) as cofactor. The cofactor is Mn(2+).

It catalyses the reaction hydrogencarbonate + L-glutamine + 2 ATP + H2O = carbamoyl phosphate + L-glutamate + 2 ADP + phosphate + 2 H(+). The enzyme catalyses hydrogencarbonate + NH4(+) + 2 ATP = carbamoyl phosphate + 2 ADP + phosphate + 2 H(+). Its pathway is amino-acid biosynthesis; L-arginine biosynthesis; carbamoyl phosphate from bicarbonate: step 1/1. The protein operates within pyrimidine metabolism; UMP biosynthesis via de novo pathway; (S)-dihydroorotate from bicarbonate: step 1/3. Its function is as follows. Large subunit of the glutamine-dependent carbamoyl phosphate synthetase (CPSase). CPSase catalyzes the formation of carbamoyl phosphate from the ammonia moiety of glutamine, carbonate, and phosphate donated by ATP, constituting the first step of 2 biosynthetic pathways, one leading to arginine and/or urea and the other to pyrimidine nucleotides. The large subunit (synthetase) binds the substrates ammonia (free or transferred from glutamine from the small subunit), hydrogencarbonate and ATP and carries out an ATP-coupled ligase reaction, activating hydrogencarbonate by forming carboxy phosphate which reacts with ammonia to form carbamoyl phosphate. The polypeptide is Carbamoyl phosphate synthase large chain (Methanosarcina barkeri (strain Fusaro / DSM 804)).